Reading from the N-terminus, the 294-residue chain is Bifunctional protein FolD (294 aa).

Residues 164-166 (GRS), Ser193, and Ile234 contribute to the NADP(+) site.

It belongs to the tetrahydrofolate dehydrogenase/cyclohydrolase family. As to quaternary structure, homodimer.

The enzyme catalyses (6R)-5,10-methylene-5,6,7,8-tetrahydrofolate + NADP(+) = (6R)-5,10-methenyltetrahydrofolate + NADPH. It carries out the reaction (6R)-5,10-methenyltetrahydrofolate + H2O = (6R)-10-formyltetrahydrofolate + H(+). It participates in one-carbon metabolism; tetrahydrofolate interconversion. Its function is as follows. Catalyzes the oxidation of 5,10-methylenetetrahydrofolate to 5,10-methenyltetrahydrofolate and then the hydrolysis of 5,10-methenyltetrahydrofolate to 10-formyltetrahydrofolate. In Flavobacterium psychrophilum (strain ATCC 49511 / DSM 21280 / CIP 103535 / JIP02/86), this protein is Bifunctional protein FolD.